A 220-amino-acid chain; its full sequence is Adenylate kinase (220 aa).

10 to 15 (GAGKGT) is an ATP binding site. Positions 30-59 (STGDMLRAAVKAGTPLGVEAKGYMDAGKLV) are NMP. AMP-binding positions include threonine 31, arginine 36, 57-59 (KLV), 85-88 (GFPR), and glutamine 92. Residues 122 to 159 (GRRTHPASGRTYHVKFNPPKVEGHDDVTGEPLIQRDDD) form an LID region. Residues arginine 123 and 132-133 (TY) contribute to the ATP site. Residues arginine 156 and arginine 167 each coordinate AMP. Glycine 206 lines the ATP pocket.

This sequence belongs to the adenylate kinase family. Monomer.

It is found in the cytoplasm. It catalyses the reaction AMP + ATP = 2 ADP. It participates in purine metabolism; AMP biosynthesis via salvage pathway; AMP from ADP: step 1/1. In terms of biological role, catalyzes the reversible transfer of the terminal phosphate group between ATP and AMP. Plays an important role in cellular energy homeostasis and in adenine nucleotide metabolism. In Burkholderia lata (strain ATCC 17760 / DSM 23089 / LMG 22485 / NCIMB 9086 / R18194 / 383), this protein is Adenylate kinase.